The following is a 135-amino-acid chain: Large ribosomal subunit protein uL16c (135 aa).

The protein belongs to the universal ribosomal protein uL16 family. Part of the 50S ribosomal subunit.

The protein resides in the plastid. Its subcellular location is the chloroplast. The sequence is that of Large ribosomal subunit protein uL16c from Gossypium hirsutum (Upland cotton).